A 326-amino-acid polypeptide reads, in one-letter code: Cyclin-dependent kinase B2-1 (326 aa).

In terms of domain architecture, Protein kinase spans 28-318; that stretch reads YEKLEKVGEG…AKKAMEHPYF (291 aa). ATP contacts are provided by residues 34–42 and Lys-57; that span reads VGEGTYGKV. Thr-38 carries the post-translational modification Phosphothreonine. Tyr-39 bears the Phosphotyrosine mark. Catalysis depends on Asp-159, which acts as the Proton acceptor. Residue Thr-193 is modified to Phosphothreonine.

This sequence belongs to the protein kinase superfamily. CMGC Ser/Thr protein kinase family. CDC2/CDKX subfamily. As to quaternary structure, interacts with CYCB2-1 and CYCB2-2. Binding to CYCB2-1 or CYCB2-2 activates CDK kinase. As to expression, expressed in the dividing region of the root apex and the intercalary meristem of internodes.

The protein resides in the nucleus. It localises to the cytoplasm. The protein localises to the cytoskeleton. Its subcellular location is the spindle. It is found in the phragmoplast. The catalysed reaction is L-seryl-[protein] + ATP = O-phospho-L-seryl-[protein] + ADP + H(+). The enzyme catalyses L-threonyl-[protein] + ATP = O-phospho-L-threonyl-[protein] + ADP + H(+). It catalyses the reaction [DNA-directed RNA polymerase] + ATP = phospho-[DNA-directed RNA polymerase] + ADP + H(+). Functionally, forms a complex with CYCB2-1 or CYCB2-2 that activates CDK kinase in tobacco BY2 cells during G2/M (mitosis) phases. May be involved in the regulation of the cell cycle at the G2/M transition. The chain is Cyclin-dependent kinase B2-1 (CDKB2-1) from Oryza sativa subsp. japonica (Rice).